Reading from the N-terminus, the 539-residue chain is MAKEIKFSEEARRAMLRGVDKLADAVKVTLGPKGRNVVLEKKFGSPLITNDGVTIAKEIELEDPFENMGAKLVAEVASKTNDVAGDGTTTATVLAQAMIREGLKNVTAGANPMGIRKGIEKAVAVAVEELKAISKPIQGKESIAQVAAISAADEEVGQLIAEAMERVGNDGVITLEESKGFTTELDVVEGMQFDRGYASPYMITDTEKMEAVLENPYILITDKKISNIQDILPILEQVVQQGKPLLIIAEDVEGEALATLVVNKLRGTFTAVAVKAPGFGDRRKAMLEDIAILTGGEVISEELGRELKSTTIASLGRASKVVVTKENTTIVEGAGDSERIKARINQIRAQLEETTSEFDRGKLQERLAKLAGGVAVIKVGAATETELKERKLRIEDALNSTRAAVEEGIVAGGGTALMNVYNKVAAIEAEGDEATGVKIVLRAIEEPVRQIAQNAGLEGSVIVERLKSEKPGIGFNAATGEWVNMIEAGIVDPTKVTRSALQNAASVAAMFLTTEAVVADKPEENKGGNSGMPDMGGMM.

ATP contacts are provided by residues 29-32 (TLGP), 86-90 (DGTTT), Gly413, 476-478 (NAA), and Asp492.

The protein belongs to the chaperonin (HSP60) family. Forms a cylinder of 14 subunits composed of two heptameric rings stacked back-to-back. Interacts with the co-chaperonin GroES.

It is found in the cytoplasm. It carries out the reaction ATP + H2O + a folded polypeptide = ADP + phosphate + an unfolded polypeptide.. Together with its co-chaperonin GroES, plays an essential role in assisting protein folding. The GroEL-GroES system forms a nano-cage that allows encapsulation of the non-native substrate proteins and provides a physical environment optimized to promote and accelerate protein folding. In Parageobacillus thermoglucosidasius (Geobacillus thermoglucosidasius), this protein is Chaperonin GroEL.